Here is a 747-residue protein sequence, read N- to C-terminus: ATP-dependent DNA helicase Hel308 (747 aa).

ATP is bound by residues Gln29 and 47–54 (VPTASGKT). One can recognise a Helicase ATP-binding domain in the interval 34–200 (DAGVADGESL…WLDAELVDSS (167 aa)). Positions 145-148 (DEVH) match the DEAH box motif. A Helicase C-terminal domain is found at 234–434 (PTEAVVRETL…REPSMRTHLL (201 aa)). A disordered region spans residues 711 to 747 (AAGHQQPEMDGVTPDADVKESAAAAGTDDGQANLGDF).

This sequence belongs to the helicase family. Hel308 subfamily. In terms of assembly, monomer.

It catalyses the reaction Couples ATP hydrolysis with the unwinding of duplex DNA by translocating in the 3'-5' direction.. The catalysed reaction is ATP + H2O = ADP + phosphate + H(+). DNA-dependent ATPase and 3'-5' DNA helicase that may be involved in repair of stalled replication forks. The polypeptide is ATP-dependent DNA helicase Hel308 (Natronomonas pharaonis (strain ATCC 35678 / DSM 2160 / CIP 103997 / JCM 8858 / NBRC 14720 / NCIMB 2260 / Gabara) (Halobacterium pharaonis)).